Here is a 95-residue protein sequence, read N- to C-terminus: ESAT-6-like protein EsxH (95 aa).

Belongs to the WXG100 family. ESAT-6 subfamily. In terms of assembly, forms a tight 1:1 complex with EsxG.

Its subcellular location is the secreted. This chain is ESAT-6-like protein EsxH, found in Mycolicibacterium smegmatis (strain ATCC 700084 / mc(2)155) (Mycobacterium smegmatis).